A 382-amino-acid chain; its full sequence is Gap junction alpha-1 protein (382 aa).

The Cytoplasmic portion of the chain corresponds to 2 to 23; the sequence is GDWSALGKLLDKVQAYSTAGGK. Ser-5 bears the Phosphoserine mark. Residues 24-44 traverse the membrane as a helical segment; the sequence is VWLSVLFIFRILLLGTAVESA. The Extracellular segment spans residues 45-76; that stretch reads WGDEQSAFRCNTQQPGCENVCYDKSFPISHVR. Intrachain disulfides connect Cys-54–Cys-192 and Cys-187–Cys-198. The chain crosses the membrane as a helical span at residues 77–97; the sequence is FWVLQIIFVSVPTLLYLAHVF. The Cytoplasmic portion of the chain corresponds to 98-155; sequence YVMRKEEKLNKKEEELKVAQTDGVNVEMHLKQIEIKKFKYGIEEHGKVKMRGGLLRTY. Lys-144 participates in a covalent cross-link: Glycyl lysine isopeptide (Lys-Gly) (interchain with G-Cter in SUMO). Residues 156–176 traverse the membrane as a helical segment; the sequence is IISILFKSIFEVAFLLIQWYI. Over 177–207 the chain is Extracellular; the sequence is YGFSLSAVYTCKRDPCPHQVDCFLSRPTEKT. Residues 208 to 228 form a helical membrane-spanning segment; that stretch reads IFIIFMLVVSLVSLALNIIEL. Over 229 to 382 the chain is Cytoplasmic; it reads FYVFFKGVKD…SRPRPDDLEI (154 aa). Lys-237 participates in a covalent cross-link: Glycyl lysine isopeptide (Lys-Gly) (interchain with G-Cter in SUMO). An interaction with NOV region spans residues 244-382; it reads SDPYHTTSGA…SRPRPDDLEI (139 aa). Position 247 is a phosphotyrosine (Tyr-247). 2 positions are modified to phosphoserine: Ser-255 and Ser-262. Residues 264–382 form an interaction with UBQLN4 region; that stretch reads KYAYFNGCSS…SRPRPDDLEI (119 aa). Position 271 is an S-nitrosocysteine (Cys-271). A Phosphothreonine modification is found at Thr-275. Residues Ser-306 and Ser-314 each carry the phosphoserine modification. Over residues 317 to 332 the composition is skewed to polar residues; the sequence is QNRMGQAGSTISNSHA. The tract at residues 317–382 is disordered; sequence QNRMGQAGST…SRPRPDDLEI (66 aa). Ser-325 carries the phosphoserine; by CK1 modification. At Thr-326 the chain carries Phosphothreonine. 2 positions are modified to phosphoserine; by CK1: Ser-328 and Ser-330. Ser-344 and Ser-365 each carry phosphoserine. A compositionally biased stretch (low complexity) spans 362 to 374; that stretch reads RPSSRASSRASSR. Ser-368 is modified (phosphoserine; by PKC/PRKCG and PKC/PRKCD). Residues Ser-369 and Ser-373 each carry the phosphoserine modification.

Belongs to the connexin family. Alpha-type (group II) subfamily. A connexon is composed of a hexamer of connexins. Interacts with SGSM3. Interacts with RIC1/CIP150. Interacts with CNST and CSNK1D. Interacts (via C-terminus) with TJP1. Interacts (via C-terminus) with SRC (via SH3 domain). Interacts (not ubiquitinated) with UBQLN4 (via UBA domain). Interacts with NOV. Interacts with TMEM65. Interacts with ANK3/ANKG and PKP2. Post-translationally, phosphorylation at Ser-325, Ser-328 and Ser-330 by CK1 modulates gap junction assembly. Phosphorylated at Ser-368 by PRKCG; phosphorylation induces disassembly of gap junction plaques and inhibition of gap junction activity. Phosphorylation at Ser-368 by PRKCD triggers its internalization into small vesicles leading to proteasome-mediated degradation. In terms of processing, sumoylated with SUMO1, SUMO2 and SUMO3, which may regulate the level of functional Cx43 gap junctions at the plasma membrane. May be desumoylated by SENP1 or SENP2. S-nitrosylation at Cys-271 is enriched at the muscle endothelial gap junction in arteries, it augments channel permeability and may regulate of smooth muscle cell to endothelial cell communication. Post-translationally, acetylated in the developing cortex; leading to delocalization from the cell membrane.

Its subcellular location is the cell membrane. The protein localises to the cell junction. It localises to the gap junction. The protein resides in the endoplasmic reticulum. Functionally, gap junction protein that acts as a regulator of bladder capacity. A gap junction consists of a cluster of closely packed pairs of transmembrane channels, the connexons, through which materials of low MW diffuse from one cell to a neighboring cell. May play a critical role in the physiology of hearing by participating in the recycling of potassium to the cochlear endolymph. Negative regulator of bladder functional capacity: acts by enhancing intercellular electrical and chemical transmission, thus sensitizing bladder muscles to cholinergic neural stimuli and causing them to contract. May play a role in cell growth inhibition through the regulation of NOV expression and localization. Plays an essential role in gap junction communication in the ventricles. In Chlorocebus aethiops (Green monkey), this protein is Gap junction alpha-1 protein (GJA1).